We begin with the raw amino-acid sequence, 1229 residues long: Putative cell division cycle ATPase (1229 aa).

The segment covering 252–267 (GKKNNNGNVKKGIKNV) has biased composition (low complexity). The interval 252-315 (GKKNNNGNVK…GGKNNSYYNE (64 aa)) is disordered. Positions 268–281 (PMDEKSYSPNDHDN) are enriched in basic and acidic residues. A compositionally biased stretch (low complexity) spans 282 to 314 (NSNNSNNNNNNDNNNSNNNNNNNNGGKNNSYYN). 568–575 (GIPGTGKT) is an ATP binding site. Disordered regions lie at residues 814–837 (TLLQNDKNEMNKDSSYDKKTDALD) and 860–892 (FSNDDEETKNKNKTNVNQKKKKNPNDKLDKNER). Basic and acidic residues-rich tracts occupy residues 819–837 (DKNEMNKDSSYDKKTDALD) and 882–892 (NPNDKLDKNER). 975-982 (GPPGCGKT) lines the ATP pocket.

The protein belongs to the AAA ATPase family.

This chain is Putative cell division cycle ATPase, found in Plasmodium falciparum (isolate 3D7).